The following is a 292-amino-acid chain: Probable 2-(5''-triphosphoribosyl)-3'-dephosphocoenzyme-A synthase (292 aa).

This sequence belongs to the CitG/MdcB family.

It catalyses the reaction 3'-dephospho-CoA + ATP = 2'-(5''-triphospho-alpha-D-ribosyl)-3'-dephospho-CoA + adenine. The sequence is that of Probable 2-(5''-triphosphoribosyl)-3'-dephosphocoenzyme-A synthase from Shigella boydii serotype 18 (strain CDC 3083-94 / BS512).